The chain runs to 434 residues: BEN domain-containing protein 7 (434 aa).

Residues Lys-16, Lys-56, and Lys-85 each participate in a glycyl lysine isopeptide (Lys-Gly) (interchain with G-Cter in SUMO2) cross-link. 2 disordered regions span residues 96–151 (PQRS…SNGE) and 212–262 (SRKR…ERTS). The segment covering 97–150 (QRSNSSTEASQGLHSNSRGAWNELPTQSGQFSGQSGPRSRTFQTQPHISASSNG) has biased composition (polar residues). The span at 212–222 (SRKRNKKKKVL) shows a compositional bias: basic residues. Lys-244 is covalently cross-linked (Glycyl lysine isopeptide (Lys-Gly) (interchain with G-Cter in SUMO2)). Positions 289-399 (GFDVFMPKSQ…RRLKRGSAEV (111 aa)) constitute a BEN domain. Residue Thr-326 is modified to Phosphothreonine. Ser-330 bears the Phosphoserine mark. The interval 414-434 (TGHTFVIKRETPEDPEPGSVA) is disordered.

This Mus musculus (Mouse) protein is BEN domain-containing protein 7 (Bend7).